The chain runs to 226 residues: PKHD-type hydroxylase LHK_00496 (226 aa).

The Fe2OG dioxygenase domain occupies arginine 78–serine 178. 3 residues coordinate Fe cation: histidine 96, aspartate 98, and histidine 159. Arginine 169 serves as a coordination point for 2-oxoglutarate.

Fe(2+) is required as a cofactor. It depends on L-ascorbate as a cofactor.

The sequence is that of PKHD-type hydroxylase LHK_00496 from Laribacter hongkongensis (strain HLHK9).